The sequence spans 839 residues: Capsid-associated protein Vp91 (839 aa).

Residues 1 to 23 (MMSGVMLLVFAIFLIIAFTLIYL) form the signal peptide. The C2HC BV-type zinc finger occupies 148 to 197 (CVPVPPCDNKPAGRYPMDERLLDTLVLNQHLDKDYSSNEHLYHPTFYLRC). Cystine bridges form between C208–C221 and C261–C274. A glycan (N-linked (GlcNAc...) asparagine; by host) is linked at N211. The Chitin-binding type-2 domain occupies 224–282 (NELCENRPDGYILSYFPSNLLVNQFMQCVSGRHVVRECPANKIFDRNLMSCVEAHPCTF). Residues N306, N337, N613, N619, and N639 are each glycosylated (N-linked (GlcNAc...) asparagine; by host). 2 disordered regions span residues 624 to 644 (SPVF…SISP) and 659 to 690 (EPDG…LPSP). Residues 667–678 (APPPTAPPPPSE) show a composition bias toward pro residues.

It is found in the virion. In terms of biological role, probable capsid-associated protein. The polypeptide is Capsid-associated protein Vp91 (p95) (Bombyx mori nuclear polyhedrosis virus (BmNPV)).